Here is a 232-residue protein sequence, read N- to C-terminus: Phosphatidylserine decarboxylase proenzyme (232 aa).

Serine 190 functions as the Schiff-base intermediate with substrate; via pyruvic acid in the catalytic mechanism. Pyruvic acid (Ser); by autocatalysis is present on serine 190.

Belongs to the phosphatidylserine decarboxylase family. PSD-A subfamily. In terms of assembly, heterodimer of a large membrane-associated beta subunit and a small pyruvoyl-containing alpha subunit. It depends on pyruvate as a cofactor. Post-translationally, is synthesized initially as an inactive proenzyme. Formation of the active enzyme involves a self-maturation process in which the active site pyruvoyl group is generated from an internal serine residue via an autocatalytic post-translational modification. Two non-identical subunits are generated from the proenzyme in this reaction, and the pyruvate is formed at the N-terminus of the alpha chain, which is derived from the carboxyl end of the proenzyme. The post-translation cleavage follows an unusual pathway, termed non-hydrolytic serinolysis, in which the side chain hydroxyl group of the serine supplies its oxygen atom to form the C-terminus of the beta chain, while the remainder of the serine residue undergoes an oxidative deamination to produce ammonia and the pyruvoyl prosthetic group on the alpha chain.

Its subcellular location is the cell membrane. The catalysed reaction is a 1,2-diacyl-sn-glycero-3-phospho-L-serine + H(+) = a 1,2-diacyl-sn-glycero-3-phosphoethanolamine + CO2. Its pathway is phospholipid metabolism; phosphatidylethanolamine biosynthesis; phosphatidylethanolamine from CDP-diacylglycerol: step 2/2. In terms of biological role, catalyzes the formation of phosphatidylethanolamine (PtdEtn) from phosphatidylserine (PtdSer). This chain is Phosphatidylserine decarboxylase proenzyme, found in Rhodopseudomonas palustris (strain HaA2).